Here is a 380-residue protein sequence, read N- to C-terminus: Cobalt-precorrin-5B C(1)-methyltransferase (380 aa).

The protein belongs to the CbiD family.

It carries out the reaction Co-precorrin-5B + S-adenosyl-L-methionine = Co-precorrin-6A + S-adenosyl-L-homocysteine. It participates in cofactor biosynthesis; adenosylcobalamin biosynthesis; cob(II)yrinate a,c-diamide from sirohydrochlorin (anaerobic route): step 6/10. Catalyzes the methylation of C-1 in cobalt-precorrin-5B to form cobalt-precorrin-6A. This is Cobalt-precorrin-5B C(1)-methyltransferase from Salinispora arenicola (strain CNS-205).